Consider the following 620-residue polypeptide: Chaperone protein HscA homolog (620 aa).

Belongs to the heat shock protein 70 family.

In terms of biological role, chaperone involved in the maturation of iron-sulfur cluster-containing proteins. Has a low intrinsic ATPase activity which is markedly stimulated by HscB. This Shewanella sp. (strain MR-7) protein is Chaperone protein HscA homolog.